The primary structure comprises 91 residues: uncharacterized protein (91 aa).

Residues 12–34 (FAIVYANITFLFYYLLDFTLPFH) form a helical membrane-spanning segment.

The protein localises to the membrane. This is an uncharacterized protein from Saccharomyces cerevisiae (strain ATCC 204508 / S288c) (Baker's yeast).